The sequence spans 271 residues: Acyl-[acyl-carrier-protein]--UDP-N-acetylglucosamine O-acyltransferase (271 aa).

This sequence belongs to the transferase hexapeptide repeat family. LpxA subfamily. Homotrimer.

Its subcellular location is the cytoplasm. The catalysed reaction is a (3R)-hydroxyacyl-[ACP] + UDP-N-acetyl-alpha-D-glucosamine = a UDP-3-O-[(3R)-3-hydroxyacyl]-N-acetyl-alpha-D-glucosamine + holo-[ACP]. The protein operates within glycolipid biosynthesis; lipid IV(A) biosynthesis; lipid IV(A) from (3R)-3-hydroxytetradecanoyl-[acyl-carrier-protein] and UDP-N-acetyl-alpha-D-glucosamine: step 1/6. In terms of biological role, involved in the biosynthesis of lipid A, a phosphorylated glycolipid that anchors the lipopolysaccharide to the outer membrane of the cell. This is Acyl-[acyl-carrier-protein]--UDP-N-acetylglucosamine O-acyltransferase from Sulfurihydrogenibium sp. (strain YO3AOP1).